Consider the following 296-residue polypeptide: 3-methyl-2-oxobutanoate hydroxymethyltransferase (296 aa).

The interval 1 to 33 (MDASDTPTHPAPHPADPAATPYGAPTTPPRPLR) is disordered. Residues 16–25 (DPAATPYGAP) show a composition bias toward low complexity. The Mg(2+) site is built by aspartate 77 and aspartate 116. Residues 77-78 (DS), aspartate 116, and lysine 146 each bind 3-methyl-2-oxobutanoate. Glutamate 148 is a Mg(2+) binding site. Catalysis depends on glutamate 214, which acts as the Proton acceptor.

It belongs to the PanB family. Homodecamer; pentamer of dimers. Mg(2+) is required as a cofactor.

It is found in the cytoplasm. The catalysed reaction is 3-methyl-2-oxobutanoate + (6R)-5,10-methylene-5,6,7,8-tetrahydrofolate + H2O = 2-dehydropantoate + (6S)-5,6,7,8-tetrahydrofolate. It participates in cofactor biosynthesis; (R)-pantothenate biosynthesis; (R)-pantoate from 3-methyl-2-oxobutanoate: step 1/2. In terms of biological role, catalyzes the reversible reaction in which hydroxymethyl group from 5,10-methylenetetrahydrofolate is transferred onto alpha-ketoisovalerate to form ketopantoate. In Frankia casuarinae (strain DSM 45818 / CECT 9043 / HFP020203 / CcI3), this protein is 3-methyl-2-oxobutanoate hydroxymethyltransferase.